Here is a 376-residue protein sequence, read N- to C-terminus: 3-dehydroquinate synthase (376 aa).

NAD(+) contacts are provided by residues 115–119, 139–140, K152, and K161; these read GVIGD and TS. Zn(2+)-binding residues include E194, H256, and H275.

Belongs to the sugar phosphate cyclases superfamily. Dehydroquinate synthase family. Requires Co(2+) as cofactor. Zn(2+) is required as a cofactor. It depends on NAD(+) as a cofactor.

It is found in the cytoplasm. It catalyses the reaction 7-phospho-2-dehydro-3-deoxy-D-arabino-heptonate = 3-dehydroquinate + phosphate. It participates in metabolic intermediate biosynthesis; chorismate biosynthesis; chorismate from D-erythrose 4-phosphate and phosphoenolpyruvate: step 2/7. Catalyzes the conversion of 3-deoxy-D-arabino-heptulosonate 7-phosphate (DAHP) to dehydroquinate (DHQ). The polypeptide is 3-dehydroquinate synthase (Rhizobium etli (strain CIAT 652)).